The following is a 406-amino-acid chain: Leu/Ile/Val-binding protein homolog 5 (406 aa).

The first 29 residues, 1–29 (MIGTRLPAWTRVLACGVAGLSLMTISAKA), serve as a signal peptide directing secretion.

Belongs to the leucine-binding protein family.

In terms of biological role, component of an amino-acid transport system. The sequence is that of Leu/Ile/Val-binding protein homolog 5 from Brucella suis biovar 1 (strain 1330).